The chain runs to 3925 residues: Polyketide synthase ThaH (3925 aa).

The interval 1–56 (MPRWRPTWLKRLSCPKQPRHPTHPKHPTHPKHPKHPKHPRHPKHPRISRRCSSASA) is disordered. The span at 17 to 49 (QPRHPTHPKHPTHPKHPKHPKHPRHPKHPRISR) shows a compositional bias: basic residues. The 76-residue stretch at 1073–1148 (GLVGGLEGEV…DIAGYIASAE (76 aa)) folds into the Carrier 1 domain. An O-(pantetheine 4'-phosphoryl)serine modification is found at serine 1108. Residues 1166-1182 (AAVATPPGRPAGEAAGA) show a composition bias toward low complexity. Residues 1166-1233 (AAVATPPGRP…GEPARAASHG (68 aa)) are disordered. Residues 1183 to 1196 (QRDRAPRAADERAD) are compositionally biased toward basic and acidic residues. Over residues 1202 to 1216 (PSDAHASKAAAIDSR) the composition is skewed to low complexity. The Ketosynthase family 3 (KS3) 1 domain maps to 1237–1667 (ADGLAIIGIA…GTNAHALVEA (431 aa)). Active-site for beta-ketoacyl synthase 1 activity residues include cysteine 1413, histidine 1549, and histidine 1589. The disordered stretch occupies residues 1679–1698 (GATGAPDVPDAPDAPDAPDA). Positions 1844-1969 (HPLLHRNVST…GHVQRIAEPA (126 aa)) are N-terminal hotdog fold. Residues 1844–2143 (HPLLHRNVST…ARRFVREPAR (300 aa)) enclose the PKS/mFAS DH domain. Histidine 1873 acts as the Proton acceptor; for dehydratase activity in catalysis. The tract at residues 1983 to 2143 (AAPRLSAARC…ARRFVREPAR (161 aa)) is C-terminal hotdog fold. The active-site Proton donor; for dehydratase activity is aspartate 2043. Composition is skewed to low complexity over residues 2594–2607 (DDPA…AASS) and 2632–2646 (PAAA…ASDA). Disordered stretches follow at residues 2594–2613 (DDPA…LPEM) and 2619–2657 (APAD…AAPA). The 74-residue stretch at 2664-2737 (EHALALLKRL…ELACYFVAHH (74 aa)) folds into the Carrier 2 domain. Serine 2698 carries the O-(pantetheine 4'-phosphoryl)serine modification. A compositionally biased stretch (low complexity) spans 2753–2768 (LAPAPAQPLAPRAPSA). A disordered region spans residues 2753-2841 (LAPAPAQPLA…AHAPAQASAP (89 aa)). Residues 2770–2779 (PARDAARSLE) show a composition bias toward basic and acidic residues. Low complexity-rich tracts occupy residues 2789-2813 (GQEP…QASA) and 2823-2841 (ETRT…ASAP). Residues 2847–3286 (AFDIAIVGLA…GSNAHLIVEE (440 aa)) enclose the Ketosynthase family 3 (KS3) 2 domain. Residues cysteine 3022, histidine 3157, and histidine 3197 each act as for beta-ketoacyl synthase 2 activity in the active site. 2 stretches are compositionally biased toward low complexity: residues 3512-3524 (ASTA…PSPA) and 3578-3592 (AAAA…SSPS). 2 disordered regions span residues 3512–3531 (ASTA…STGE) and 3578–3619 (AAAA…AAPD). The segment covering 3593–3603 (PSSPSPLPSSP) has biased composition (pro residues). Low complexity predominate over residues 3604-3619 (PRMSSRQHASPAAAPD). Positions 3622-3699 (AALLDIEAFL…AMARHVSSNA (78 aa)) constitute a Carrier 3 domain. Position 3659 is an O-(pantetheine 4'-phosphoryl)serine (serine 3659). The segment at 3734–3754 (PAPFASAAPPEPPASPARADG) is disordered. Positions 3762-3839 (TSLDAIRAHL…ALARFVGTQL (78 aa)) constitute a Carrier 4 domain. At serine 3799 the chain carries O-(pantetheine 4'-phosphoryl)serine.

The protein belongs to the ATP-dependent AMP-binding enzyme family. It depends on pantetheine 4'-phosphate as a cofactor.

Its subcellular location is the cytoplasm. The protein operates within antibiotic biosynthesis. Involved in production of the polyketide antibiotic thailandamide. The chain is Polyketide synthase ThaH from Burkholderia thailandensis (strain ATCC 700388 / DSM 13276 / CCUG 48851 / CIP 106301 / E264).